The sequence spans 335 residues: MKKWLPAFLFLSLSGCNDALAANQSTMFYSFNDNIYRPQLSVKVTDIVQFIVDINSASSTATLSYVACNGFTWTHGLYWSEYFAWLVVPKHVSYNGYNIYLELQSRGSFSLDAEDNDNYYLTKGFAWDEANTSGQTCFNIGEKRSLAWSFGGVTLNARLPVDLPKGDYTFPVKFLRGIQRNNYDYIGGRYKIPSSLMKTFPFNGTLNFSIKNTGGCRPSAQSLEINHGDLSINSANNHYAAQTLSVSCDVPTNIRFFLLSNTNPAYSHGQQFSVGLGHGWDSIISINGVDTGETTMRWYRAGTQNLTTGSRLYGESSKIQPGVLSGSATLLMILP.

The first 21 residues, 1 to 21 (MKKWLPAFLFLSLSGCNDALA), serve as a signal peptide directing secretion.

The protein belongs to the adhesin PapG family.

The protein localises to the secreted. The protein resides in the fimbrium. Its function is as follows. Tip adhesin component of type P pili that binds preferentially to Gal-alpha(1-4)-Gal-containing glycolipids such as globoside. This tip is common in E.coli strains that cause human cystitis, but rare in pyelonephritic isolates. This is Fimbrial adhesin PapGIII from Escherichia coli.